The following is a 387-amino-acid chain: Tetratricopeptide repeat protein 4 (387 aa).

Met-1 is modified (N-acetylmethionine). A phosphoserine mark is found at Ser-47 and Ser-51. TPR repeat units lie at residues Ala-79–Asp-112, Ala-117–His-150, and Leu-151–Glu-184. A Phosphoserine modification is found at Ser-243.

It belongs to the TTC4 family. In terms of assembly, interacts (via TPR repeats) with HSP90AB1. Interacts with HSPA8 and CDC6. Interacts with TBK1. Interacts with MSL1. Highly expressed in proliferating tissue and tumor cell lines but not in normal cell lines.

Its subcellular location is the nucleus. It localises to the nucleoplasm. It is found in the cytoplasm. Its function is as follows. May act as a co-chaperone for HSP90AB1. Promotes Sendai virus (SeV)-induced host cell innate immune responses. This chain is Tetratricopeptide repeat protein 4 (TTC4), found in Homo sapiens (Human).